Here is a 161-residue protein sequence, read N- to C-terminus: NADH-quinone oxidoreductase subunit I (161 aa).

4Fe-4S ferredoxin-type domains are found at residues 52–82 (LRRYPDGEERCIACKLCEAICPAQAITIEAK) and 92–121 (TKYDIDMTKCIYCGLCQEACPVDAIVEGPN). [4Fe-4S] cluster is bound by residues cysteine 62, cysteine 65, cysteine 68, cysteine 72, cysteine 101, cysteine 104, cysteine 107, and cysteine 111.

This sequence belongs to the complex I 23 kDa subunit family. NDH-1 is composed of 14 different subunits. Subunits NuoA, H, J, K, L, M, N constitute the membrane sector of the complex. [4Fe-4S] cluster serves as cofactor.

The protein resides in the cell inner membrane. It catalyses the reaction a quinone + NADH + 5 H(+)(in) = a quinol + NAD(+) + 4 H(+)(out). Functionally, NDH-1 shuttles electrons from NADH, via FMN and iron-sulfur (Fe-S) centers, to quinones in the respiratory chain. The immediate electron acceptor for the enzyme in this species is believed to be ubiquinone. Couples the redox reaction to proton translocation (for every two electrons transferred, four hydrogen ions are translocated across the cytoplasmic membrane), and thus conserves the redox energy in a proton gradient. The sequence is that of NADH-quinone oxidoreductase subunit I from Orientia tsutsugamushi (strain Boryong) (Rickettsia tsutsugamushi).